Here is a 532-residue protein sequence, read N- to C-terminus: Chaperonin GroEL 2 (532 aa).

ATP is bound by residues T30–P33, K51, D87–T91, G415, N479–A481, and D495.

This sequence belongs to the chaperonin (HSP60) family. In terms of assembly, forms a cylinder of 14 subunits composed of two heptameric rings stacked back-to-back. Interacts with the co-chaperonin GroES.

The protein resides in the cytoplasm. It carries out the reaction ATP + H2O + a folded polypeptide = ADP + phosphate + an unfolded polypeptide.. Together with its co-chaperonin GroES, plays an essential role in assisting protein folding. The GroEL-GroES system forms a nano-cage that allows encapsulation of the non-native substrate proteins and provides a physical environment optimized to promote and accelerate protein folding. The polypeptide is Chaperonin GroEL 2 (Vibrio parahaemolyticus serotype O3:K6 (strain RIMD 2210633)).